We begin with the raw amino-acid sequence, 186 residues long: Large ribosomal subunit protein uL22 (186 aa).

Positions 160-186 (AAENEPAKKKLSKKKLQRQKEKMMRNE) are disordered. The segment covering 177 to 186 (RQKEKMMRNE) has biased composition (basic and acidic residues).

It belongs to the universal ribosomal protein uL22 family.

The chain is Large ribosomal subunit protein uL22 (RpL17) from Aedes aegypti (Yellowfever mosquito).